Reading from the N-terminus, the 164-residue chain is NADH-quinone oxidoreductase subunit I (164 aa).

4Fe-4S ferredoxin-type domains lie at 55–85 (LRRY…IDAE) and 95–124 (TRYD…EGPN). [4Fe-4S] cluster-binding residues include cysteine 65, cysteine 68, cysteine 71, cysteine 75, cysteine 104, cysteine 107, cysteine 110, and cysteine 114.

The protein belongs to the complex I 23 kDa subunit family. NDH-1 is composed of 14 different subunits. Subunits NuoA, H, J, K, L, M, N constitute the membrane sector of the complex. [4Fe-4S] cluster is required as a cofactor.

Its subcellular location is the cell inner membrane. It carries out the reaction a quinone + NADH + 5 H(+)(in) = a quinol + NAD(+) + 4 H(+)(out). In terms of biological role, NDH-1 shuttles electrons from NADH, via FMN and iron-sulfur (Fe-S) centers, to quinones in the respiratory chain. The immediate electron acceptor for the enzyme in this species is believed to be ubiquinone. Couples the redox reaction to proton translocation (for every two electrons transferred, four hydrogen ions are translocated across the cytoplasmic membrane), and thus conserves the redox energy in a proton gradient. The polypeptide is NADH-quinone oxidoreductase subunit I (Roseobacter denitrificans (strain ATCC 33942 / OCh 114) (Erythrobacter sp. (strain OCh 114))).